The primary structure comprises 172 residues: Adenine phosphoribosyltransferase (172 aa).

It belongs to the purine/pyrimidine phosphoribosyltransferase family. As to quaternary structure, homodimer.

Its subcellular location is the cytoplasm. The enzyme catalyses AMP + diphosphate = 5-phospho-alpha-D-ribose 1-diphosphate + adenine. It functions in the pathway purine metabolism; AMP biosynthesis via salvage pathway; AMP from adenine: step 1/1. Functionally, catalyzes a salvage reaction resulting in the formation of AMP, that is energically less costly than de novo synthesis. The chain is Adenine phosphoribosyltransferase from Clostridium botulinum (strain Loch Maree / Type A3).